The chain runs to 369 residues: Cyclic AMP receptor-like protein A (369 aa).

The Extracellular portion of the chain corresponds to 1–4 (MIQI). A helical transmembrane segment spans residues 5–22 (LLSTFISFIIIIVSSNDI). Residues 23–72 (RSGENDNFNNNKMINNFLTTITTNDTIIIKETESPNDYDFSKEQIESLDK) are Cytoplasmic-facing. A helical membrane pass occupies residues 73–93 (IVYFSSTMGIVGALFIIVSFF). Residues 94–100 (LFKAART) lie on the Extracellular side of the membrane. A helical membrane pass occupies residues 101-121 (FATKMIFFLSLSDLFAAIFYL). Residues 122–146 (PYYRDSDIMCNLQGMGLVFFLSSSY) lie on the Cytoplasmic side of the membrane. A helical membrane pass occupies residues 147–167 (LWTMCISISLFMVFFTTIFEL). At 168–173 (NHWFKY) the chain is on the extracellular side. The helical transmembrane segment at 174–194 (FHFICWGIPLFTAIISLIFHA) threads the bilayer. The Cytoplasmic portion of the chain corresponds to 195–212 (YGKTGSWCFISDPTSIFR). A helical membrane pass occupies residues 213–233 (LLYYLPLIVVFFINLVVFIAI). Topologically, residues 234–247 (RWKISQHSNSLVSR) are extracellular. A helical transmembrane segment spans residues 248–268 (VNIIVSFYLIAFSLSQLPTII). The Cytoplasmic segment spans residues 269–369 (NSIQNFSDPD…KLIIDDYNRV (101 aa)).

It belongs to the G-protein coupled receptor 5 family.

The protein localises to the membrane. In terms of biological role, receptor for cAMP which may play a role in prestalk cell differentiation. May act as a negative regulator of cell growth. This is Cyclic AMP receptor-like protein A (crlA) from Dictyostelium discoideum (Social amoeba).